We begin with the raw amino-acid sequence, 569 residues long: Protein AF-9 (569 aa).

In terms of domain architecture, YEATS spans methionine 1–alanine 138. Residues alanine 138–asparagine 476 form a disordered region. Low complexity predominate over residues serine 149–serine 190. Over residues glutamate 202 to alanine 265 the composition is skewed to basic and acidic residues. Serine 289 and serine 295 each carry phosphoserine. A Nuclear localization signal motif is present at residues alanine 296–lysine 301. Low complexity predominate over residues serine 304–alanine 314. The segment covering alanine 323 to lysine 350 has biased composition (basic and acidic residues). Residue lysine 340 forms a Glycyl lysine isopeptide (Lys-Gly) (interchain with G-Cter in SUMO2) linkage. The segment covering aspartate 358–glutamate 369 has biased composition (acidic residues). Positions serine 372 to serine 396 are enriched in low complexity. Serine 413 and serine 420 each carry phosphoserine. The segment covering aspartate 415–serine 430 has biased composition (acidic residues). The segment covering valine 446–proline 462 has biased composition (low complexity). Phosphoserine is present on serine 484.

Component of the super elongation complex (SEC), at least composed of EAF1, EAF2, CDK9, MLLT3/AF9, AFF (AFF1 or AFF4), the P-TEFb complex and ELL (ELL, ELL2 or ELL3). Interacts with BCOR. Interacts with CBX8. Interacts with ALKBH4. In terms of tissue distribution, ubiquitously expressed. Strong expression in the spleen.

It localises to the nucleus. The protein resides in the chromosome. Chromatin reader component of the super elongation complex (SEC), a complex required to increase the catalytic rate of RNA polymerase II transcription by suppressing transient pausing by the polymerase at multiple sites along the DNA. Specifically recognizes and binds acylated histone H3, with a preference for histone H3 that is crotonylated. Crotonylation marks active promoters and enhancers and confers resistance to transcriptional repressors. Recognizes and binds histone H3 crotonylated at 'Lys-9' (H3K9cr), and with slightly lower affinity histone H3 crotonylated at 'Lys-18' (H3K18cr). Also recognizes and binds histone H3 acetylated and butyrylated at 'Lys-9' (H3K9ac and H3K9bu, respectively), but with lower affinity than crotonylated histone H3. In the SEC complex, MLLT3 is required to recruit the complex to crotonylated histones. Recruitment of the SEC complex to crotonylated histones promotes recruitment of DOT1L on active chromatin to deposit histone H3 'Lys-79' methylation (H3K79me). Plays a key role in hematopoietic stem cell (HSC) maintenance by preserving, rather than conferring, HSC stemness. Acts by binding to the transcription start site of active genes in HSCs and sustaining level of H3K79me2, probably by recruiting DOT1L. The chain is Protein AF-9 (Mllt3) from Mus musculus (Mouse).